The sequence spans 460 residues: Flavonol 3-O-glucosyltransferase (460 aa).

H23 functions as the Proton acceptor in the catalytic mechanism. Residues H23 and Q88 each coordinate an anthocyanidin. D123 serves as the catalytic Charge relay. T145 contacts UDP-alpha-D-glucose. H154 provides a ligand contact to an anthocyanidin. UDP-alpha-D-glucose-binding residues include A339, Q341, H356, W359, N360, S361, and E364. Position 379 (G379) interacts with an anthocyanidin. UDP-alpha-D-glucose is bound by residues D380 and Q381.

Belongs to the UDP-glycosyltransferase family.

It carries out the reaction a flavonol + UDP-alpha-D-glucose = a flavonol 3-O-beta-D-glucoside + UDP + H(+). It catalyses the reaction quercetin + UDP-alpha-D-glucose = quercetin 3-O-beta-D-glucoside + UDP + H(+). The protein operates within flavonoid metabolism. Its function is as follows. Flavonol 3-O-glucosyltransferase that catalyzes the transfer of glucose from UDP-glucose to the 3-OH position of quercetin and kaempferol. Possesses high quercetin 3-O-glucosyltransferase activity in vitro. Catalyzes the glycosylation of anthocyanins from UDP-glucose. Also active in vitro on benzoates and benzoate derivatives. The polypeptide is Flavonol 3-O-glucosyltransferase (Arabidopsis thaliana (Mouse-ear cress)).